Here is an 867-residue protein sequence, read N- to C-terminus: V-set and immunoglobulin domain-containing protein 10-like (867 aa).

An N-terminal signal peptide occupies residues 1–27 (MDNPQALPLFLLLASLVGILTLRASSG). Residues 28 to 776 (LQQTNFSSAF…RAGPTLSHGA (749 aa)) lie on the Extracellular side of the membrane. N-linked (GlcNAc...) asparagine glycosylation is present at Asn-32. The span at 35 to 45 (SAFSSDSKSSS) shows a compositional bias: low complexity. A disordered region spans residues 35 to 60 (SAFSSDSKSSSQGLGVEVPSIKPPSW). 3 N-linked (GlcNAc...) asparagine glycosylation sites follow: Asn-88, Asn-96, and Asn-144. Residues 104–186 (LSPVSPFSET…PESKFSAETH (83 aa)) are disordered. Residues 137–153 (TVKTPASNISTQVSHTK) show a composition bias toward polar residues. Positions 159 to 170 (PDSKFSPDDMDL) are enriched in basic and acidic residues. The segment covering 173–186 (SAQSPESKFSAETH) has biased composition (polar residues). 2 consecutive Ig-like C2-type domains span residues 302-394 (PQLS…ADVS) and 402-487 (PTIT…SLLN). The cysteines at positions 324 and 378 are disulfide-linked. Asn-423 carries an N-linked (GlcNAc...) asparagine glycan. The cysteines at positions 428 and 471 are disulfide-linked. N-linked (GlcNAc...) asparagine glycosylation occurs at Asn-487. Positions 602-627 (ASGCPPPSRASWAREGRPLAPGGGSR) are disordered. 2 N-linked (GlcNAc...) asparagine glycosylation sites follow: Asn-641 and Asn-650. The chain crosses the membrane as a helical span at residues 777 to 797 (IAGIVLGSLLGLALLAVLLLL). Residues 798–867 (CICCLCRFRG…QAQTPVQLSL (70 aa)) lie on the Cytoplasmic side of the membrane.

In terms of tissue distribution, expressed in the esophagus, particularly in the suprabasilar layers of the epithelium. Expression is largely reduced in esophageal metaplasia, dysplasia, and adenocarcinoma lesions.

The protein localises to the membrane. This is V-set and immunoglobulin domain-containing protein 10-like (VSIG10L) from Homo sapiens (Human).